A 142-amino-acid polypeptide reads, in one-letter code: Large ribosomal subunit protein uL13 (142 aa).

This sequence belongs to the universal ribosomal protein uL13 family. In terms of assembly, part of the 50S ribosomal subunit.

In terms of biological role, this protein is one of the early assembly proteins of the 50S ribosomal subunit, although it is not seen to bind rRNA by itself. It is important during the early stages of 50S assembly. The sequence is that of Large ribosomal subunit protein uL13 from Delftia acidovorans (strain DSM 14801 / SPH-1).